The following is a 63-amino-acid chain: DNA-directed RNA polymerase 7 kDa subunit (63 aa).

Belongs to the poxviridae DNA-directed RNA polymerase 7 kDa subunit family. As to quaternary structure, the DNA-dependent RNA polymerase used for intermediate and late genes expression consists of eight subunits 147 kDa, 133 kDa, 35 kDa, 30 kDa, 22 kDa, 19 kDa, 18 kDa and 7 kDa totalling more than 500 kDa in mass. The same holoenzyme, with the addition of the transcription-specificity factor RAP94, is used for early gene expression.

Its subcellular location is the virion. It catalyses the reaction RNA(n) + a ribonucleoside 5'-triphosphate = RNA(n+1) + diphosphate. Its function is as follows. Part of the DNA-dependent RNA polymerase which catalyzes the transcription of viral DNA into RNA using the four ribonucleoside triphosphates as substrates. Responsible for the transcription of early, intermediate and late genes. DNA-dependent RNA polymerase associates with the early transcription factor (ETF) thereby allowing the early genes transcription. Late transcription, and probably also intermediate transcription, require newly synthesized RNA polymerase. The polypeptide is DNA-directed RNA polymerase 7 kDa subunit (RPO7) (Fowlpox virus (strain NVSL) (FPV)).